The sequence spans 609 residues: Proteasome-associated ATPase (609 aa).

The segment at 1-24 (MADSERSEAFGTPDDTPLSSNDAA) is disordered. Positions 19–96 (SSNDAAELEQ…LREEVDRLGQ (78 aa)) form a coiled coil. Residue 296–301 (GCGKTL) coordinates ATP. The interval 608–609 (YL) is docks into pockets in the proteasome alpha-ring.

It belongs to the AAA ATPase family. Homohexamer. Assembles into a hexameric ring structure that caps the 20S proteasome core. Strongly interacts with the prokaryotic ubiquitin-like protein Pup through a hydrophobic interface; the interacting region of ARC lies in its N-terminal coiled-coil domain. There is one Pup binding site per ARC hexamer ring. Upon ATP-binding, the C-terminus of ARC interacts with the alpha-rings of the proteasome core, possibly by binding to the intersubunit pockets.

Its pathway is protein degradation; proteasomal Pup-dependent pathway. ATPase which is responsible for recognizing, binding, unfolding and translocation of pupylated proteins into the bacterial 20S proteasome core particle. May be essential for opening the gate of the 20S proteasome via an interaction with its C-terminus, thereby allowing substrate entry and access to the site of proteolysis. Thus, the C-termini of the proteasomal ATPase may function like a 'key in a lock' to induce gate opening and therefore regulate proteolysis. The polypeptide is Proteasome-associated ATPase (Mycobacterium ulcerans (strain Agy99)).